We begin with the raw amino-acid sequence, 396 residues long: 1-deoxy-D-xylulose 5-phosphate reductoisomerase (396 aa).

NADPH is bound by residues T13, G14, S15, I16, and N127. K128 is a binding site for 1-deoxy-D-xylulose 5-phosphate. Residue E129 coordinates NADPH. D153 contacts Mn(2+). Residues S154, E155, S184, and H207 each coordinate 1-deoxy-D-xylulose 5-phosphate. E155 lines the Mn(2+) pocket. Position 213 (G213) interacts with NADPH. 1-deoxy-D-xylulose 5-phosphate is bound by residues S220, N225, K226, and E229. E229 serves as a coordination point for Mn(2+).

It belongs to the DXR family. Mg(2+) serves as cofactor. Requires Mn(2+) as cofactor.

It carries out the reaction 2-C-methyl-D-erythritol 4-phosphate + NADP(+) = 1-deoxy-D-xylulose 5-phosphate + NADPH + H(+). The protein operates within isoprenoid biosynthesis; isopentenyl diphosphate biosynthesis via DXP pathway; isopentenyl diphosphate from 1-deoxy-D-xylulose 5-phosphate: step 1/6. Catalyzes the NADPH-dependent rearrangement and reduction of 1-deoxy-D-xylulose-5-phosphate (DXP) to 2-C-methyl-D-erythritol 4-phosphate (MEP). This chain is 1-deoxy-D-xylulose 5-phosphate reductoisomerase, found in Pseudomonas fluorescens (strain Pf0-1).